A 137-amino-acid chain; its full sequence is Large-conductance mechanosensitive channel (137 aa).

Helical transmembrane passes span 10–30 (FAMR…AAFG) and 76–96 (GVFI…FMAI).

This sequence belongs to the MscL family. Homopentamer.

It localises to the cell inner membrane. In terms of biological role, channel that opens in response to stretch forces in the membrane lipid bilayer. May participate in the regulation of osmotic pressure changes within the cell. In Klebsiella pneumoniae subsp. pneumoniae (strain ATCC 700721 / MGH 78578), this protein is Large-conductance mechanosensitive channel.